We begin with the raw amino-acid sequence, 225 residues long: Ribonuclease 3 (225 aa).

The region spanning 5 to 127 (IDKLERKLGY…IIGAIYLDSD (123 aa)) is the RNase III domain. Glu-40 serves as a coordination point for Mg(2+). Asp-44 is a catalytic residue. Residues Asp-113 and Glu-116 each contribute to the Mg(2+) site. Residue Glu-116 is part of the active site. The DRBM domain maps to 154–224 (DPKTRLQEFL…AETALEQLTN (71 aa)). The segment at 204-225 (GTSRRKAEQAAAETALEQLTNG) is disordered. The span at 212–225 (QAAAETALEQLTNG) shows a compositional bias: low complexity.

It belongs to the ribonuclease III family. As to quaternary structure, homodimer. Requires Mg(2+) as cofactor.

It is found in the cytoplasm. It catalyses the reaction Endonucleolytic cleavage to 5'-phosphomonoester.. Digests double-stranded RNA. Involved in the processing of primary rRNA transcript to yield the immediate precursors to the large and small rRNAs (23S and 16S). Processes some mRNAs, and tRNAs when they are encoded in the rRNA operon. Processes pre-crRNA and tracrRNA of type II CRISPR loci if present in the organism. This Vibrio parahaemolyticus serotype O3:K6 (strain RIMD 2210633) protein is Ribonuclease 3.